Consider the following 207-residue polypeptide: MTKLSKRQLDILRFIKEEVKRKGYPPSVREIGEAVGLASSSTVHGHLARLETKGLIRRDPTKPRAIEILDTEEEIHIPKNQVVNVPVIGKVTAGTPITAVENIEEYFPLPERLAPPDEHVFMLEIMGESMIDAGILDQDYVIVKQQNTANNGDIVVAMTEDDEATVKRFFKEETHIRLQPENPTMEPIILQNVTILGKVIGVFRTVH.

The segment at residues 28-48 (VREIGEAVGLASSSTVHGHLA) is a DNA-binding region (H-T-H motif). Active-site for autocatalytic cleavage activity residues include S129 and K167.

This sequence belongs to the peptidase S24 family. As to quaternary structure, homodimer.

It catalyses the reaction Hydrolysis of Ala-|-Gly bond in repressor LexA.. Represses a number of genes involved in the response to DNA damage (SOS response), including recA and lexA. In the presence of single-stranded DNA, RecA interacts with LexA causing an autocatalytic cleavage which disrupts the DNA-binding part of LexA, leading to derepression of the SOS regulon and eventually DNA repair. This Bacillus licheniformis (strain ATCC 14580 / DSM 13 / JCM 2505 / CCUG 7422 / NBRC 12200 / NCIMB 9375 / NCTC 10341 / NRRL NRS-1264 / Gibson 46) protein is LexA repressor.